Here is a 252-residue protein sequence, read N- to C-terminus: Imidazole glycerol phosphate synthase subunit HisF (252 aa).

Active-site residues include Asp-11 and Asp-130.

Belongs to the HisA/HisF family. Heterodimer of HisH and HisF.

It is found in the cytoplasm. It catalyses the reaction 5-[(5-phospho-1-deoxy-D-ribulos-1-ylimino)methylamino]-1-(5-phospho-beta-D-ribosyl)imidazole-4-carboxamide + L-glutamine = D-erythro-1-(imidazol-4-yl)glycerol 3-phosphate + 5-amino-1-(5-phospho-beta-D-ribosyl)imidazole-4-carboxamide + L-glutamate + H(+). It functions in the pathway amino-acid biosynthesis; L-histidine biosynthesis; L-histidine from 5-phospho-alpha-D-ribose 1-diphosphate: step 5/9. Its function is as follows. IGPS catalyzes the conversion of PRFAR and glutamine to IGP, AICAR and glutamate. The HisF subunit catalyzes the cyclization activity that produces IGP and AICAR from PRFAR using the ammonia provided by the HisH subunit. This is Imidazole glycerol phosphate synthase subunit HisF from Bacillus velezensis (strain DSM 23117 / BGSC 10A6 / LMG 26770 / FZB42) (Bacillus amyloliquefaciens subsp. plantarum).